The sequence spans 104 residues: DNA-directed RNA polymerase subunit omega (104 aa).

Belongs to the RNA polymerase subunit omega family. The RNAP catalytic core consists of 2 alpha, 1 beta, 1 beta' and 1 omega subunit. When a sigma factor is associated with the core the holoenzyme is formed, which can initiate transcription.

The catalysed reaction is RNA(n) + a ribonucleoside 5'-triphosphate = RNA(n+1) + diphosphate. Its function is as follows. Promotes RNA polymerase assembly. Latches the N- and C-terminal regions of the beta' subunit thereby facilitating its interaction with the beta and alpha subunits. The chain is DNA-directed RNA polymerase subunit omega (rpoZ) from Streptococcus pyogenes serotype M1.